The chain runs to 353 residues: Photosystem II D2 protein (353 aa).

Threonine 2 carries the N-acetylthreonine modification. Threonine 2 is subject to Phosphothreonine. The helical transmembrane segment at 41-61 threads the bilayer; sequence CAYFALGGWFTGTTFVTSWYT. Histidine 118 is a chlorophyll a binding site. Residues 125–141 form a helical membrane-spanning segment; that stretch reads GFMLRQFELARSVQLRP. Pheophytin a-binding residues include glutamine 130 and asparagine 143. The chain crosses the membrane as a helical span at residues 153 to 166; that stretch reads VFVSVFLIYPLGQS. Histidine 198 lines the chlorophyll a pocket. The helical transmembrane segment at 208 to 228 threads the bilayer; the sequence is AALLCAIHGATVENTLFEDGD. Residues histidine 215 and phenylalanine 262 each coordinate a plastoquinone. Fe cation is bound at residue histidine 215. Residue histidine 269 coordinates Fe cation. The helical transmembrane segment at 279–295 threads the bilayer; it reads GLWMSALGVVGLALNLR.

It belongs to the reaction center PufL/M/PsbA/D family. As to quaternary structure, PSII is composed of 1 copy each of membrane proteins PsbA, PsbB, PsbC, PsbD, PsbE, PsbF, PsbH, PsbI, PsbJ, PsbK, PsbL, PsbM, PsbT, PsbX, PsbY, PsbZ, Psb30/Ycf12, at least 3 peripheral proteins of the oxygen-evolving complex and a large number of cofactors. It forms dimeric complexes. The D1/D2 heterodimer binds P680, chlorophylls that are the primary electron donor of PSII, and subsequent electron acceptors. It shares a non-heme iron and each subunit binds pheophytin, quinone, additional chlorophylls, carotenoids and lipids. There is also a Cl(-1) ion associated with D1 and D2, which is required for oxygen evolution. The PSII complex binds additional chlorophylls, carotenoids and specific lipids. is required as a cofactor.

The protein resides in the plastid. It localises to the chloroplast thylakoid membrane. It carries out the reaction 2 a plastoquinone + 4 hnu + 2 H2O = 2 a plastoquinol + O2. Functionally, photosystem II (PSII) is a light-driven water:plastoquinone oxidoreductase that uses light energy to abstract electrons from H(2)O, generating O(2) and a proton gradient subsequently used for ATP formation. It consists of a core antenna complex that captures photons, and an electron transfer chain that converts photonic excitation into a charge separation. The D1/D2 (PsbA/PsbD) reaction center heterodimer binds P680, the primary electron donor of PSII as well as several subsequent electron acceptors. D2 is needed for assembly of a stable PSII complex. The chain is Photosystem II D2 protein from Phaseolus vulgaris (Kidney bean).